Here is a 351-residue protein sequence, read N- to C-terminus: Minor outer capsid protein P9 (351 aa).

Residues 246–308 (GVPAALPQPD…KAVPSGNVSA (63 aa)) form a disordered region. Basic and acidic residues predominate over residues 285-297 (MIRKKVETSKDAP).

The protein belongs to the phytoreovirus minor outer capsid protein P9 family.

Its subcellular location is the virion. The protein localises to the host cytoplasm. In terms of biological role, minor outer capsid protein. The protein is Minor outer capsid protein P9 of Rice dwarf virus (isolate O) (RDV).